An 815-amino-acid polypeptide reads, in one-letter code: MGKKKVKDRSAGTDSSSETAGPSCTHIRKGTENSVLKKACLNEHWSSCQDCEQDKPEEKQILEDQTDGESPAVWMCLKCGHRGCGRSGNQHAIKHYETPRSEPHCLVLSLDVWSVWCYICDDEVQYSSTGQLAQLITNIRKQVLTAPDKRNASKKSWKEDISVMNSAEQTQDEEKGKKGKQKSSSKQEDSPKSHQSAAAGSSAVVSVRGLSNLGNTCFFNAVVQSLSQTQYLRELLKQIAEEKSSFSITPALSSELDPLQIQLERPGSLTLAMCQLMNEIQETKKGVVTPKELFTQVCKKAPRFKGFQQQDSQELLRYLLDGMRAEEAKRVNSGILEALKSSGKNFEAEQTKKIVKEYEKDGAPKNFVDRVFGGAMSSTVMCKECKTVSLVTEMFLDLSLPVADEAYRKKNQKKAVQHRHSVSDDGDQDTSSLANGNEDMPTGTGSKYQQKKAKKQAKKQAKNQRRQQKQGGKVTLDAITNQSSTDPADSSMQTQTVSVNGSADAQPADTNQEDLSLEKHNEDQDDEEPEQEQAASVNNRFTALSEDQTTEDIAEQVNEDEDEIEQNCAEEEELVEELNTMSLTTPSEGDVENGEDTLEDVKEYTVVNRDPELAFRALASRTAPVKQECSVESCLYQFTEVEHLTENNRLMCVTCTKQQPGYKDGCKKAVYRDALKQMLISDPPVVLTLHLKRFQQVAYSVCKVNRHVQFPQILDLAPFCSLNCTGVKEGETQVLYSLYGIVEHSGTMRSGHYTAYVKSRPSTHNCVQNGTAAASGDAEASKGSWFHISDSSVHPVPEAKVQSSQAYLLFYEKIS.

Positions 1–27 (MGKKKVKDRSAGTDSSSETAGPSCTHI) are disordered. Positions 12–22 (GTDSSSETAGP) are enriched in polar residues. The segment at 22–143 (PSCTHIRKGT…QLITNIRKQV (122 aa)) adopts a UBP-type zinc-finger fold. The Zn(2+) site is built by cysteine 24, histidine 26, cysteine 48, cysteine 51, cysteine 76, cysteine 79, cysteine 84, histidine 91, histidine 95, histidine 104, cysteine 117, and cysteine 120. A compositionally biased stretch (basic and acidic residues) spans 148–161 (DKRNASKKSWKEDI). A disordered region spans residues 148–200 (DKRNASKKSWKEDISVMNSAEQTQDEEKGKKGKQKSSSKQEDSPKSHQSAAAG). In terms of domain architecture, USP spans 208–814 (RGLSNLGNTC…QAYLLFYEKI (607 aa)). The Nucleophile role is filled by cysteine 217. Basic residues-rich tracts occupy residues 411-420 (NQKKAVQHRH) and 449-468 (QQKK…RRQQ). Residues 411 to 510 (NQKKAVQHRH…GSADAQPADT (100 aa)) are disordered. The segment covering 478-510 (AITNQSSTDPADSSMQTQTVSVNGSADAQPADT) has biased composition (polar residues). Histidine 752 acts as the Proton acceptor in catalysis.

Belongs to the peptidase C19 family. USP16 subfamily. In terms of assembly, homotetramer.

The protein localises to the nucleus. The catalysed reaction is Thiol-dependent hydrolysis of ester, thioester, amide, peptide and isopeptide bonds formed by the C-terminal Gly of ubiquitin (a 76-residue protein attached to proteins as an intracellular targeting signal).. Functionally, specifically deubiquitinates 'Lys-120' of histone H2A (H2AK119Ub), a specific tag for epigenetic transcriptional repression, thereby acting as a coactivator. Deubiquitination of histone H2A is a prerequisite for subsequent phosphorylation at 'Ser-11' of histone H3 (H3S10ph), and is required for chromosome segregation when cells enter into mitosis. Regulates Hox gene expression via histone H2A deubiquitination. Prefers nucleosomal substrates. Does not deubiquitinate histone H2B. This is Ubiquitin carboxyl-terminal hydrolase 16 (usp16) from Danio rerio (Zebrafish).